A 159-amino-acid chain; its full sequence is Transmembrane protein 89 (159 aa).

The N-terminal stretch at 1–24 (MLHVLASLPLLLLLVTSASTHAWS) is a signal peptide. Residues 25 to 63 (RPLWYQVGLDLQPWGCQPKSVEGCRGGLSCPGYWLGPGA) lie on the Extracellular side of the membrane. A helical membrane pass occupies residues 64 to 86 (SRIYPVAAVMITTTMLMICRKIL). Over 87–159 (QGRRRSQATK…QIKGTSTQSG (73 aa)) the chain is Cytoplasmic. The interval 91-110 (RSQATKGEHPQVTTEPCGPW) is disordered.

Its subcellular location is the membrane. This chain is Transmembrane protein 89 (TMEM89), found in Homo sapiens (Human).